Here is a 100-residue protein sequence, read N- to C-terminus: MVPYEYYVALSGLLMVLGFIGVIVRKNIIAMLISTELMLNAVNVAFVAFDMKLHDVVGQVFVFFILTIAAAEAAIGLGLIMAIYRMKKDVDVEKLTELKG.

The next 3 helical transmembrane spans lie at 4–24, 28–48, and 60–80; these read YEYY…GVIV, IIAM…AFVA, and VFVF…LGLI.

This sequence belongs to the complex I subunit 4L family. NDH-1 is composed of 14 different subunits. Subunits NuoA, H, J, K, L, M, N constitute the membrane sector of the complex.

The protein localises to the cell inner membrane. The catalysed reaction is a quinone + NADH + 5 H(+)(in) = a quinol + NAD(+) + 4 H(+)(out). In terms of biological role, NDH-1 shuttles electrons from NADH, via FMN and iron-sulfur (Fe-S) centers, to quinones in the respiratory chain. The immediate electron acceptor for the enzyme in this species is believed to be ubiquinone. Couples the redox reaction to proton translocation (for every two electrons transferred, four hydrogen ions are translocated across the cytoplasmic membrane), and thus conserves the redox energy in a proton gradient. The protein is NADH-quinone oxidoreductase subunit K of Sulfurihydrogenibium azorense (strain DSM 15241 / OCM 825 / Az-Fu1).